Consider the following 328-residue polypeptide: DNA-directed RNA polymerase subunit alpha (328 aa).

The interval 1-231 (MIYQMQMPER…EHVSLFANFS (231 aa)) is alpha N-terminal domain (alpha-NTD). Positions 252-328 (MRKLLQTRIE…MDITKYQMKS (77 aa)) are alpha C-terminal domain (alpha-CTD).

This sequence belongs to the RNA polymerase alpha chain family. As to quaternary structure, homodimer. The RNAP catalytic core consists of 2 alpha, 1 beta, 1 beta' and 1 omega subunit. When a sigma factor is associated with the core the holoenzyme is formed, which can initiate transcription.

The catalysed reaction is RNA(n) + a ribonucleoside 5'-triphosphate = RNA(n+1) + diphosphate. DNA-dependent RNA polymerase catalyzes the transcription of DNA into RNA using the four ribonucleoside triphosphates as substrates. The protein is DNA-directed RNA polymerase subunit alpha of Prosthecochloris aestuarii (strain DSM 271 / SK 413).